A 1028-amino-acid polypeptide reads, in one-letter code: Pro-apoptotic serine protease NMA111 (1028 aa).

Over residues 1–10 (MEMSSKRKHS) the composition is skewed to basic residues. The segment at 1–39 (MEMSSKRKHSSGPISLRSTKHLRSDTAASPQPLTPDDQT) is disordered. Residues 85–269 (VVSIHFCQTA…AATDYFLPLD (185 aa)) form a serine protease region. Residues His123, Asp154, and Ser236 each act as charge relay system in the active site. 2 PDZ domains span residues 292-377 (QWII…LLVQ) and 878-959 (IFCG…VTFD). Positions 1003-1028 (SDNLNADAMDEGRDDGISDMEPDGEK) are disordered. Over residues 1019-1028 (ISDMEPDGEK) the composition is skewed to acidic residues.

This sequence belongs to the peptidase S1C family.

The protein localises to the nucleus. In terms of biological role, nuclear serine protease which mediates apoptosis. The sequence is that of Pro-apoptotic serine protease NMA111 (NMA111) from Ajellomyces capsulatus (strain NAm1 / WU24) (Darling's disease fungus).